A 403-amino-acid polypeptide reads, in one-letter code: Phosphopentomutase (403 aa).

Positions 13, 298, 303, 339, 340, and 351 each coordinate Mn(2+).

Belongs to the phosphopentomutase family. Mn(2+) serves as cofactor.

Its subcellular location is the cytoplasm. The enzyme catalyses 2-deoxy-alpha-D-ribose 1-phosphate = 2-deoxy-D-ribose 5-phosphate. It carries out the reaction alpha-D-ribose 1-phosphate = D-ribose 5-phosphate. The protein operates within carbohydrate degradation; 2-deoxy-D-ribose 1-phosphate degradation; D-glyceraldehyde 3-phosphate and acetaldehyde from 2-deoxy-alpha-D-ribose 1-phosphate: step 1/2. Functionally, isomerase that catalyzes the conversion of deoxy-ribose 1-phosphate (dRib-1-P) and ribose 1-phosphate (Rib-1-P) to deoxy-ribose 5-phosphate (dRib-5-P) and ribose 5-phosphate (Rib-5-P), respectively. The protein is Phosphopentomutase of Streptococcus pneumoniae (strain JJA).